Consider the following 340-residue polypeptide: Glycerol-3-phosphate dehydrogenase [NAD(P)+] (340 aa).

4 residues coordinate NADPH: Ser-11, Trp-12, Arg-33, and Lys-106. Residues Lys-106, Gly-137, and Ser-139 each contribute to the sn-glycerol 3-phosphate site. Ala-141 serves as a coordination point for NADPH. Sn-glycerol 3-phosphate-binding residues include Lys-192, Asp-245, Ser-255, Arg-256, and Asn-257. Lys-192 acts as the Proton acceptor in catalysis. Arg-256 lines the NADPH pocket. Residues Val-280 and Glu-282 each coordinate NADPH.

This sequence belongs to the NAD-dependent glycerol-3-phosphate dehydrogenase family.

The protein resides in the cytoplasm. The catalysed reaction is sn-glycerol 3-phosphate + NAD(+) = dihydroxyacetone phosphate + NADH + H(+). It carries out the reaction sn-glycerol 3-phosphate + NADP(+) = dihydroxyacetone phosphate + NADPH + H(+). Its pathway is membrane lipid metabolism; glycerophospholipid metabolism. Its function is as follows. Catalyzes the reduction of the glycolytic intermediate dihydroxyacetone phosphate (DHAP) to sn-glycerol 3-phosphate (G3P), the key precursor for phospholipid synthesis. This Bacillus cereus (strain B4264) protein is Glycerol-3-phosphate dehydrogenase [NAD(P)+].